The chain runs to 218 residues: 2-C-methyl-D-erythritol 4-phosphate cytidylyltransferase (218 aa).

It belongs to the IspD/TarI cytidylyltransferase family. IspD subfamily.

It catalyses the reaction 2-C-methyl-D-erythritol 4-phosphate + CTP + H(+) = 4-CDP-2-C-methyl-D-erythritol + diphosphate. Its pathway is isoprenoid biosynthesis; isopentenyl diphosphate biosynthesis via DXP pathway; isopentenyl diphosphate from 1-deoxy-D-xylulose 5-phosphate: step 2/6. In terms of biological role, catalyzes the formation of 4-diphosphocytidyl-2-C-methyl-D-erythritol from CTP and 2-C-methyl-D-erythritol 4-phosphate (MEP). This is 2-C-methyl-D-erythritol 4-phosphate cytidylyltransferase from Chlamydia muridarum (strain MoPn / Nigg).